The chain runs to 259 residues: Putative hydro-lyase Bphyt_4813 (259 aa).

It belongs to the D-glutamate cyclase family.

The polypeptide is Putative hydro-lyase Bphyt_4813 (Paraburkholderia phytofirmans (strain DSM 17436 / LMG 22146 / PsJN) (Burkholderia phytofirmans)).